A 136-amino-acid polypeptide reads, in one-letter code: METSVSRVTVSLTLLVLIICSADAMNYLAFPRMGRARPGYLAFPRMGRSQMKTETGTDCCGLGMKSEFVIGQEGKEELRHGACSSSVACCAGLREIVDQKQDGVFFSMCVPDFVASRSSEESSSEVLSKLKSLLQK.

Positions 1–24 (METSVSRVTVSLTLLVLIICSADA) are cleaved as a signal peptide. Methionine amide occurs at positions 33 and 46. Positions 49 to 135 (SQMKTETGTD…VLSKLKSLLQ (87 aa)) are cleaved as a propeptide — carboxy-terminal peptide.

It belongs to the SCP family. In terms of processing, contains three disulfide bonds. Highly expressed in the buccal ganglion.

It is found in the secreted. Functionally, involved in the stimulation of contractile activity in the gut, the increase of the amplitude of the heart beat, and enhancement of the contractile response of the radula closer muscle. This Aplysia californica (California sea hare) protein is Small cardioactive peptides.